A 732-amino-acid chain; its full sequence is Calcineurin-interacting protein 2 (732 aa).

6 disordered regions span residues 1–24, 115–169, 181–232, 310–351, 372–397, and 426–708; these read MNRG…REPY, DYEP…ALPK, QKKD…LDDR, ILSR…TSRR, RSQS…STVS, and QTVT…PLEE. The span at 8-17 shows a compositional bias: polar residues; sequence YNRSRSTSSR. A compositionally biased stretch (basic and acidic residues) spans 117–129; the sequence is EPLRKEPELKEQK. Composition is skewed to polar residues over residues 151–163 and 189–208; these read SGIT…SSRT and IPRQ…NNEL. Residues 312–323 are compositionally biased toward low complexity; it reads SRSVSTSPSSVT. Over residues 324-351 the composition is skewed to polar residues; sequence DNIPKTSTSRIPSSENPKTMEHTTTSRR. The span at 426–439 shows a compositional bias: polar residues; sequence QTVTNVRVPSSRGS. Composition is skewed to basic and acidic residues over residues 526-538 and 546-557; these read QSPE…RFAD and PGDHQAREEDLP. Polar residues predominate over residues 607–619; sequence SVTPSEKSLPRNS. The segment covering 688–705 has biased composition (low complexity); sequence NSPNKSSSSSKARPSAAP.

In terms of assembly, interacts with tax-6. In terms of tissue distribution, expressed in intestine.

In Caenorhabditis elegans, this protein is Calcineurin-interacting protein 2.